Reading from the N-terminus, the 473-residue chain is MKTLYSLRRFYHVETLFNGTLALTGRDQETTGFAWWAGNARLINLSGKLLGAHVAHAGLIVFWAGAMNLFEVAHFVPEKPMYEQGLILLPHLATLGWGVGPGGEVIDTFPYFVSGVLHLISSAVLGFGGIYHALLGPETLEESFPFFGYVWKDRNKMTTILGIHLILLGIGAFLLVFKASYFGGIYDTWAPGGGDVRKITNLTLSPSIIFGYLLKSPFGGEGWIVSVDDLEDIIGGHVWLGSICILGGIWHILTKPFAWARRALVWSGEAYLSYSLGALAVFGFIACCFVWFNNTAYPSEFYGPTGPEASQAQAFTFLVRDQRLGANVGSAQGPTGLGKYLMRSPTGEVIFGGETMRFWDLRAPWLEPLRGPNGLDLSRLKKDIQPWQERRSAEYMTHAPLGSLNSVGGVATEINAVNYVSPRSWLATSHFVLGFFLFVGHLWHAGRARAAAAGFEKGIDRDFEPVLSMTPLN.

A propeptide spanning residues 1–14 (MKTLYSLRRFYHVE) is cleaved from the precursor. N-acetylthreonine is present on threonine 15. Residue threonine 15 is modified to Phosphothreonine. Transmembrane regions (helical) follow at residues 69–93 (LFEV…PHLA), 134–155 (LLGP…KDRN), 178–200 (KASY…RKIT), 255–275 (KPFA…LSYS), and 291–312 (WFNN…ASQA). Glutamate 367 provides a ligand contact to [CaMn4O5] cluster. A helical transmembrane segment spans residues 447 to 471 (RARAAAAGFEKGIDRDFEPVLSMTP).

This sequence belongs to the PsbB/PsbC family. PsbC subfamily. In terms of assembly, PSII is composed of 1 copy each of membrane proteins PsbA, PsbB, PsbC, PsbD, PsbE, PsbF, PsbH, PsbI, PsbJ, PsbK, PsbL, PsbM, PsbT, PsbX, PsbY, PsbZ, Psb30/Ycf12, at least 3 peripheral proteins of the oxygen-evolving complex and a large number of cofactors. It forms dimeric complexes. It depends on Binds multiple chlorophylls and provides some of the ligands for the Ca-4Mn-5O cluster of the oxygen-evolving complex. It may also provide a ligand for a Cl- that is required for oxygen evolution. PSII binds additional chlorophylls, carotenoids and specific lipids. as a cofactor.

The protein resides in the plastid. It is found in the chloroplast thylakoid membrane. Functionally, one of the components of the core complex of photosystem II (PSII). It binds chlorophyll and helps catalyze the primary light-induced photochemical processes of PSII. PSII is a light-driven water:plastoquinone oxidoreductase, using light energy to abstract electrons from H(2)O, generating O(2) and a proton gradient subsequently used for ATP formation. The chain is Photosystem II CP43 reaction center protein from Cicer arietinum (Chickpea).